A 1390-amino-acid polypeptide reads, in one-letter code: DNA-directed RNA polymerase subunit beta' (1390 aa).

Residues C70, C72, C85, and C88 each contribute to the Zn(2+) site. Positions 460, 462, and 464 each coordinate Mg(2+). Positions 814, 888, 895, and 898 each coordinate Zn(2+).

This sequence belongs to the RNA polymerase beta' chain family. The RNAP catalytic core consists of 2 alpha, 1 beta, 1 beta' and 1 omega subunit. When a sigma factor is associated with the core the holoenzyme is formed, which can initiate transcription. Mg(2+) is required as a cofactor. Zn(2+) serves as cofactor.

The catalysed reaction is RNA(n) + a ribonucleoside 5'-triphosphate = RNA(n+1) + diphosphate. In terms of biological role, DNA-dependent RNA polymerase catalyzes the transcription of DNA into RNA using the four ribonucleoside triphosphates as substrates. This Pseudoalteromonas translucida (strain TAC 125) protein is DNA-directed RNA polymerase subunit beta'.